A 319-amino-acid polypeptide reads, in one-letter code: CD2 antigen cytoplasmic tail-binding protein 2 homolog (319 aa).

2 disordered regions span residues 1 to 57 (MASK…EDDV) and 105 to 124 (NAFD…KNEP). Residues 12-24 (KVKEESFKKHTLD) show a composition bias toward basic and acidic residues. Phosphoserine is present on residues serine 25 and serine 30. Residues 25 to 47 (SDEEDSDDYEREYLNDSDIEGGE) are compositionally biased toward acidic residues. A Phosphotyrosine modification is found at tyrosine 37. A Phosphoserine modification is found at serine 41. Residues 109–124 (PAKDEENSSDEEKNEP) are compositionally biased toward basic and acidic residues. One can recognise a GYF domain in the interval 260 to 316 (EVTWEFKWSQDETDIQGPFSTEKMLKWSQENYFKNGVYVRKCGENTNFYTSNRIDFD).

The protein resides in the nucleus. Required for embryonic epithelial tissue repair, but not for the assembly of the actomyosin cable at the wound edge. Probably acts downstream of rl in the regulation of Ddc and msn transcription to promote wound healing. This is CD2 antigen cytoplasmic tail-binding protein 2 homolog (holn1) from Drosophila melanogaster (Fruit fly).